Here is a 614-residue protein sequence, read N- to C-terminus: DNA mismatch repair protein MutL (614 aa).

The protein belongs to the DNA mismatch repair MutL/HexB family.

Functionally, this protein is involved in the repair of mismatches in DNA. It is required for dam-dependent methyl-directed DNA mismatch repair. May act as a 'molecular matchmaker', a protein that promotes the formation of a stable complex between two or more DNA-binding proteins in an ATP-dependent manner without itself being part of a final effector complex. This chain is DNA mismatch repair protein MutL, found in Thermoanaerobacter pseudethanolicus (strain ATCC 33223 / 39E) (Clostridium thermohydrosulfuricum).